We begin with the raw amino-acid sequence, 216 residues long: ATP-dependent Clp protease proteolytic subunit (216 aa).

The active-site Nucleophile is the Ser101. The active site involves His126.

Belongs to the peptidase S14 family. In terms of assembly, component of the chloroplastic Clp protease core complex.

Its subcellular location is the plastid. The protein localises to the chloroplast stroma. It catalyses the reaction Hydrolysis of proteins to small peptides in the presence of ATP and magnesium. alpha-casein is the usual test substrate. In the absence of ATP, only oligopeptides shorter than five residues are hydrolyzed (such as succinyl-Leu-Tyr-|-NHMec, and Leu-Tyr-Leu-|-Tyr-Trp, in which cleavage of the -Tyr-|-Leu- and -Tyr-|-Trp bonds also occurs).. In terms of biological role, cleaves peptides in various proteins in a process that requires ATP hydrolysis. Has a chymotrypsin-like activity. Plays a major role in the degradation of misfolded proteins. In Oryza nivara (Indian wild rice), this protein is ATP-dependent Clp protease proteolytic subunit.